The chain runs to 101 residues: Protein Tat (101 aa).

Residues 1-10 are compositionally biased toward basic and acidic residues; sequence MEPVDPRLEP. Positions 1–20 are disordered; sequence MEPVDPRLEPWNHPGSQPKT. An interaction with human CREBBP region spans residues 1–24; that stretch reads MEPVDPRLEPWNHPGSQPKTACNN. Positions 1 to 48 are transactivation; sequence MEPVDPRLEPWNHPGSQPKTACNNCYCKRCCYHCLYCFTKKGLGISYG. Residues Cys22, Cys25, and Cys27 each coordinate Zn(2+). The interval 22-37 is cysteine-rich; sequence CNNCYCKRCCYHCLYC. N6-acetyllysine; by host PCAF is present on Lys28. Zn(2+) is bound by residues Cys30, His33, Cys34, and Cys37. Residues 38–48 are core; that stretch reads FTKKGLGISYG. The segment covering 48 to 58 has biased composition (basic residues); it reads GRKKRSQRRRT. The interval 48–101 is disordered; that stretch reads GRKKRSQRRRTPQSSKSHQDLIPEQPLSQQQGDQTGQKKQKEALESKTEADPCD. A Nuclear localization signal, RNA-binding (TAR), and protein transduction motif is present at residues 49 to 57; that stretch reads RKKRSQRRR. Residues 49–86 form an interaction with the host capping enzyme RNGTT region; that stretch reads RKKRSQRRRTPQSSKSHQDLIPEQPLSQQQGDQTGQKK. N6-acetyllysine; by host EP300 and GCN5L2 occurs at positions 50 and 51. An Asymmetric dimethylarginine; by host PRMT6 modification is found at Arg52. Over residues 86-101 the composition is skewed to basic and acidic residues; sequence KQKEALESKTEADPCD.

The protein belongs to the lentiviruses Tat family. As to quaternary structure, interacts with host CCNT1. Associates with the P-TEFb complex composed at least of Tat, P-TEFb (CDK9 and CCNT1), TAR RNA, RNA Pol II. Recruits the HATs CREBBP, TAF1/TFIID, EP300, PCAF and GCN5L2. Interacts with host KAT5/Tip60; this interaction targets the latter to degradation. Interacts with the host deacetylase SIRT1. Interacts with host capping enzyme RNGTT; this interaction stimulates RNGTT. Binds to host KDR, and to the host integrins ITGAV/ITGB3 and ITGA5/ITGB1. Interacts with host KPNB1/importin beta-1 without previous binding to KPNA1/importin alpha-1. Interacts with EIF2AK2. Interacts with host nucleosome assembly protein NAP1L1; this interaction may be required for the transport of Tat within the nucleus, since the two proteins interact at the nuclear rim. Interacts with host C1QBP/SF2P32; this interaction involves lysine-acetylated Tat. Interacts with the host chemokine receptors CCR2, CCR3 and CXCR4. Interacts with host DPP4/CD26; this interaction may trigger an anti-proliferative effect. Interacts with host LDLR. Interacts with the host extracellular matrix metalloproteinase MMP1. Interacts with host PRMT6; this interaction mediates Tat's methylation. Interacts with, and is ubiquitinated by MDM2/Hdm2. Interacts with host PSMC3 and HTATIP2. Interacts with STAB1; this interaction may overcome SATB1-mediated repression of IL2 and IL2RA (interleukin) in T cells by binding to the same domain than HDAC1. Interacts (when acetylated) with human CDK13, thereby increasing HIV-1 mRNA splicing and promoting the production of the doubly spliced HIV-1 protein Nef. Interacts with host TBP; this interaction modulates the activity of transcriptional pre-initiation complex. Interacts with host RELA. Interacts with host PLSCR1; this interaction negatively regulates Tat transactivation activity by altering its subcellular distribution. Asymmetrical arginine methylation by host PRMT6 seems to diminish the transactivation capacity of Tat and affects the interaction with host CCNT1. Post-translationally, acetylation by EP300, CREBBP, GCN5L2/GCN5 and PCAF regulates the transactivation activity of Tat. EP300-mediated acetylation of Lys-50 promotes dissociation of Tat from the TAR RNA through the competitive binding to PCAF's bromodomain. In addition, the non-acetylated Tat's N-terminus can also interact with PCAF. PCAF-mediated acetylation of Lys-28 enhances Tat's binding to CCNT1. Lys-50 is deacetylated by SIRT1. In terms of processing, polyubiquitination by host MDM2 does not target Tat to degradation, but activates its transactivation function and fosters interaction with CCNT1 and TAR RNA. Phosphorylated by EIF2AK2 on serine and threonine residues adjacent to the basic region important for TAR RNA binding and function. Phosphorylation of Tat by EIF2AK2 is dependent on the prior activation of EIF2AK2 by dsRNA.

The protein resides in the host nucleus. Its subcellular location is the host nucleolus. The protein localises to the host cytoplasm. It is found in the secreted. Transcriptional activator that increases RNA Pol II processivity, thereby increasing the level of full-length viral transcripts. Recognizes a hairpin structure at the 5'-LTR of the nascent viral mRNAs referred to as the transactivation responsive RNA element (TAR) and recruits the cyclin T1-CDK9 complex (P-TEFb complex) that will in turn hyperphosphorylate the RNA polymerase II to allow efficient elongation. The CDK9 component of P-TEFb and other Tat-activated kinases hyperphosphorylate the C-terminus of RNA Pol II that becomes stabilized and much more processive. Other factors such as HTATSF1/Tat-SF1, SUPT5H/SPT5, and HTATIP2 are also important for Tat's function. Besides its effect on RNA Pol II processivity, Tat induces chromatin remodeling of proviral genes by recruiting the histone acetyltransferases (HATs) CREBBP, EP300 and PCAF to the chromatin. This also contributes to the increase in proviral transcription rate, especially when the provirus integrates in transcriptionally silent region of the host genome. To ensure maximal activation of the LTR, Tat mediates nuclear translocation of NF-kappa-B by interacting with host RELA. Through its interaction with host TBP, Tat may also modulate transcription initiation. Tat can reactivate a latently infected cell by penetrating in it and transactivating its LTR promoter. In the cytoplasm, Tat is thought to act as a translational activator of HIV-1 mRNAs. In terms of biological role, extracellular circulating Tat can be endocytosed by surrounding uninfected cells via the binding to several surface receptors such as CD26, CXCR4, heparan sulfate proteoglycans (HSPG) or LDLR. Neurons are rarely infected, but they internalize Tat via their LDLR. Through its interaction with nuclear HATs, Tat is potentially able to control the acetylation-dependent cellular gene expression. Modulates the expression of many cellular genes involved in cell survival, proliferation or in coding for cytokines or cytokine receptors. Tat plays a role in T-cell and neurons apoptosis. Tat induced neurotoxicity and apoptosis probably contribute to neuroAIDS. Circulating Tat also acts as a chemokine-like and/or growth factor-like molecule that binds to specific receptors on the surface of the cells, affecting many cellular pathways. In the vascular system, Tat binds to ITGAV/ITGB3 and ITGA5/ITGB1 integrins dimers at the surface of endothelial cells and competes with bFGF for heparin-binding sites, leading to an excess of soluble bFGF. This is Protein Tat from Homo sapiens (Human).